A 147-amino-acid chain; its full sequence is E3 ubiquitin-protein ligase RNF181 homolog (147 aa).

Residues 70-111 (CSVCKEPAEEGQKYRILPCKHEFHEECILLWLKKTNSCPLCR) form an RING-type; atypical zinc finger.

This sequence belongs to the RNF181 family.

It carries out the reaction S-ubiquitinyl-[E2 ubiquitin-conjugating enzyme]-L-cysteine + [acceptor protein]-L-lysine = [E2 ubiquitin-conjugating enzyme]-L-cysteine + N(6)-ubiquitinyl-[acceptor protein]-L-lysine.. Its pathway is protein modification; protein ubiquitination. E3 ubiquitin-protein ligase which accepts ubiquitin from an E2 ubiquitin-conjugating enzyme in the form of a thioester and then directly transfers the ubiquitin to targeted substrates. The sequence is that of E3 ubiquitin-protein ligase RNF181 homolog from Drosophila melanogaster (Fruit fly).